The sequence spans 921 residues: Extended synaptotagmin-2 (921 aa).

The Cytoplasmic portion of the chain corresponds to 1-103 (MTANRDAALS…RPGGPENPGG (103 aa)). Residues 1 to 103 (MTANRDAALS…RPGGPENPGG (103 aa)) form a disordered region. The segment covering 58–75 (GARRRAKTARGLRGHRQR) has biased composition (basic residues). The helical transmembrane segment at 104 to 124 (VLSVELPGLLAQLARSFALLL) threads the bilayer. Over 125–127 (PVY) the chain is Lumenal. A helical transmembrane segment spans residues 128–148 (ALGYLGLSFSWVLLALALLAW). Residues 149 to 921 (CRRSRGLKAL…EDGTRPQAMT (773 aa)) lie on the Cytoplasmic side of the membrane. The region spanning 191 to 370 (DTERAEWLNK…LPNRITVPLV (180 aa)) is the SMP-LTD domain. C2 domains lie at 369-489 (LVSE…DEWF) and 514-639 (NLDK…QLSN). Ca(2+) is bound by residues Lys-400, Asp-401, Asp-413, Asp-460, Glu-461, Asp-462, Asp-464, Asp-466, and Asp-467. The tract at residues 660–754 (RERPPDHQHS…GHISVKEPTP (95 aa)) is disordered. Phosphoserine is present on residues Ser-691 and Ser-693. Residue Thr-705 is modified to Phosphothreonine. A phosphoserine mark is found at Ser-736, Ser-738, Ser-739, Ser-743, Ser-748, Ser-755, Ser-758, and Ser-761. The region spanning 786 to 908 (PLGQIQLTIR…ELAKGWTQWY (123 aa)) is the C2 3 domain. Positions 833–840 (KRRSGRRK) are required for phosphatidylinositol 4,5-bisphosphate-dependent location at the cell membrane.

It belongs to the extended synaptotagmin family. As to quaternary structure, homodimer. Interacts with ESYT1 and ESYT3. Interacts with FGFR1 that has been activated by FGF1 binding. Interacts with the AP-2 complex; identified in a complex with the AP-2 complex and FGFR1. As to expression, widely expressed with high level in cerebellum.

The protein resides in the cell membrane. Its subcellular location is the endoplasmic reticulum membrane. In terms of biological role, tethers the endoplasmic reticulum to the cell membrane and promotes the formation of appositions between the endoplasmic reticulum and the cell membrane. Binds glycerophospholipids in a barrel-like domain and may play a role in cellular lipid transport. Plays a role in FGF signaling via its role in the rapid internalization of FGFR1 that has been activated by FGF1 binding; this occurs most likely via the AP-2 complex. Promotes the localization of SACM1L at endoplasmic reticulum-plasma membrane contact sites (EPCS). The chain is Extended synaptotagmin-2 from Homo sapiens (Human).